Here is a 50-residue protein sequence, read N- to C-terminus: Penaeidin-1 (50 aa).

3 cysteine pairs are disulfide-bonded: Cys-25/Cys-38, Cys-27/Cys-45, and Cys-39/Cys-46.

As to expression, higher expression in hemocytes and to a lesser extent in heart, testis, gills, intestine, lymphoid organ and hepatopancreas. Traces in eyes and subcuticular epithelium. Not present in the brain.

It localises to the cytoplasmic granule. Antibacterial activity against M.luteus and E.coli bacteria. Antifungal activity against N.crassa and F.oxysporum. Presents chitin-binding activity. This is Penaeidin-1 from Penaeus vannamei (Whiteleg shrimp).